A 432-amino-acid polypeptide reads, in one-letter code: Probable D-serine dehydratase (432 aa).

N6-(pyridoxal phosphate)lysine is present on K112.

The protein belongs to the serine/threonine dehydratase family. DsdA subfamily. It depends on pyridoxal 5'-phosphate as a cofactor.

The enzyme catalyses D-serine = pyruvate + NH4(+). The chain is Probable D-serine dehydratase from Pediococcus pentosaceus (strain ATCC 25745 / CCUG 21536 / LMG 10740 / 183-1w).